The sequence spans 468 residues: 6-phospho-beta-galactosidase (468 aa).

Residues Gln-19, His-116, Asn-159, Glu-160, and Asn-297 each coordinate D-galactose 6-phosphate. Glu-160 acts as the Proton donor in catalysis. Glu-375 (nucleophile) is an active-site residue. D-galactose 6-phosphate is bound by residues Ser-428, Trp-429, Lys-435, and Tyr-437.

It belongs to the glycosyl hydrolase 1 family.

The enzyme catalyses a 6-phospho-beta-D-galactoside + H2O = D-galactose 6-phosphate + an alcohol. It functions in the pathway carbohydrate metabolism; lactose degradation; D-galactose 6-phosphate and beta-D-glucose from lactose 6-phosphate: step 1/1. This Streptococcus pyogenes serotype M28 (strain MGAS6180) protein is 6-phospho-beta-galactosidase.